A 455-amino-acid polypeptide reads, in one-letter code: Ribosomal protein uS12 methylthiotransferase RimO (455 aa).

The MTTase N-terminal domain occupies 10–120 (PKVGMVSLGC…VVEAVHDAAP (111 aa)). [4Fe-4S] cluster contacts are provided by Cys19, Cys55, Cys84, Cys151, Cys155, and Cys158. Residues 137 to 380 (LTPRHYSYLK…MAKTAAISAA (244 aa)) form the Radical SAM core domain. The region spanning 383 to 455 (EAKIGRTLPV…DEHDLFGVVT (73 aa)) is the TRAM domain.

The protein belongs to the methylthiotransferase family. RimO subfamily. Requires [4Fe-4S] cluster as cofactor.

The protein localises to the cytoplasm. The enzyme catalyses L-aspartate(89)-[ribosomal protein uS12]-hydrogen + (sulfur carrier)-SH + AH2 + 2 S-adenosyl-L-methionine = 3-methylsulfanyl-L-aspartate(89)-[ribosomal protein uS12]-hydrogen + (sulfur carrier)-H + 5'-deoxyadenosine + L-methionine + A + S-adenosyl-L-homocysteine + 2 H(+). In terms of biological role, catalyzes the methylthiolation of an aspartic acid residue of ribosomal protein uS12. In Sphingopyxis alaskensis (strain DSM 13593 / LMG 18877 / RB2256) (Sphingomonas alaskensis), this protein is Ribosomal protein uS12 methylthiotransferase RimO.